A 137-amino-acid polypeptide reads, in one-letter code: Small ribosomal subunit protein uS9 (137 aa).

A disordered region spans residues 118–137 (KERKKYGLRKARKAPQYSKR).

This sequence belongs to the universal ribosomal protein uS9 family.

The protein is Small ribosomal subunit protein uS9 of Acaryochloris marina (strain MBIC 11017).